Consider the following 104-residue polypeptide: Replication restart protein PriB (104 aa).

The region spanning 1–101 (MTNRLVLSGT…LHAEQIDLID (101 aa)) is the SSB domain.

Belongs to the PriB family. As to quaternary structure, homodimer. Interacts with PriA and DnaT. Component of the replication restart primosome. Primosome assembly occurs via a 'hand-off' mechanism. PriA binds to replication forks, subsequently PriB then DnaT bind; DnaT then displaces ssDNA to generate the helicase loading substrate.

Involved in the restart of stalled replication forks, which reloads the replicative helicase on sites other than the origin of replication; the PriA-PriB pathway is the major replication restart pathway. During primosome assembly it facilitates complex formation between PriA and DnaT on DNA; stabilizes PriA on DNA. Stimulates the DNA unwinding activity of PriA helicase. The sequence is that of Replication restart protein PriB from Enterobacter sp. (strain 638).